The following is a 718-amino-acid chain: Sodium/myo-inositol cotransporter (718 aa).

Residues 1 to 9 (MRAVLETAD) are Extracellular-facing. Residues 10-29 (IAIVALYFILVMCIGFFAMW) form a helical membrane-spanning segment. The Cytoplasmic segment spans residues 30 to 38 (KSNRSTVSG). Residues 39 to 57 (YFLAGRSMTWVAIGASLFV) traverse the membrane as a helical segment. Residues 58-86 (SNIGSEHFIGLAGSGAASGFAVGAWEFNA) are Extracellular-facing. The chain crosses the membrane as a helical span at residues 87-110 (LLLLQLLGWVFIPIYIRSGVYTMP). At 111 to 123 (EYLSKRFGGHRIQ) the chain is on the cytoplasmic side. Residues 124–144 (VYFAALSLILYIFTKLSVDLY) traverse the membrane as a helical segment. The Extracellular segment spans residues 145-157 (SGALFIQESLGWN). Residues 158 to 183 (LYVSVILLIGMTALLTVTGGLVAVIY) form a helical membrane-spanning segment. The Cytoplasmic portion of the chain corresponds to 184–186 (TDT). Residues 187 to 205 (LQALLMIVGALTLMIISMM) traverse the membrane as a helical segment. Topologically, residues 206–303 (EIGGFEEVKR…HAKGSTLMAG (98 aa)) are extracellular. N-linked (GlcNAc...) asparagine glycosylation occurs at Asn232. Residues 304–324 (FLKLLPMFIIVVPGMISRILF) traverse the membrane as a helical segment. Residues 325–353 (ADDIACINPEHCMQVCGSRAGCSNIAYPR) lie on the Cytoplasmic side of the membrane. Residues 354–376 (LVMKLVPVGLRGLMMAVMIAALM) form a helical membrane-spanning segment. Topologically, residues 377–406 (SDLDSIFNSASTIFTLDVYKLIRRSASSRE) are extracellular. The helical transmembrane segment at 407-430 (LMIVGRIFVAFMVVISIAWVPIIV) threads the bilayer. Topologically, residues 431-443 (EMQGGQMYLYIQE) are cytoplasmic. Residues 444–462 (VADYLTPPVAALFLLAIFW) traverse the membrane as a helical segment. The Extracellular portion of the chain corresponds to 463-510 (KRCNEQGAFYGGMAGFVLGAVRLTLAFAYRAPECDQPDNRPGFIKDIH). A helical membrane pass occupies residues 511–532 (YMYVATALFWVTGLITVIVSLL). Residues 533-695 (TPPPTKEQIR…QMLEEPPQVK (163 aa)) are Cytoplasmic-facing. Phosphoserine is present on residues Ser594 and Ser632. The helical transmembrane segment at 696–716 (LILNIGLFAVCSLGIFMFVYF) threads the bilayer. Over 717–718 (SL) the chain is Extracellular.

The protein belongs to the sodium:solute symporter (SSF) (TC 2.A.21) family. As to quaternary structure, interacts with KCNQ2 (via the pore module). Interacts with KCNQ1; this interaction is direct. Forms coregulatory complexes with ion channels KCNQ2-KCNQ3 and KCNQ1-KCNE2. As to expression, kidney cortex and medulla.

Its subcellular location is the apical cell membrane. It is found in the basolateral cell membrane. It catalyses the reaction myo-inositol(out) + 2 Na(+)(out) = myo-inositol(in) + 2 Na(+)(in). The enzyme catalyses scyllo-inositol(out) + 2 Na(+)(out) = scyllo-inositol(in) + 2 Na(+)(in). Inhibited by phlorizin and phloretin. In terms of biological role, electrogenic Na(+)-coupled sugar symporter that actively transports myo-inositol and its stereoisomer scyllo-inositol across the plasma membrane, with a Na(+) to sugar coupling ratio of 2:1. Maintains myo-inositol concentration gradient that defines cell volume and fluid balance during osmotic stress, in particular in the fetoplacental unit and central nervous system. Forms coregulatory complexes with voltage-gated K(+) ion channels, allosterically altering ion selectivity, voltage dependence and gating kinetics of the channel. In turn, K(+) efflux through the channel forms a local electrical gradient that modulates electrogenic Na(+)-coupled myo-inositol influx through the transporter. Associates with KCNQ1-KCNE2 channel in the apical membrane of choroid plexus epithelium and regulates the myo-inositol gradient between blood and cerebrospinal fluid with an impact on neuron excitability. Associates with KCNQ2-KCNQ3 channel altering ion selectivity, increasing Na(+) and Cs(+) permeation relative to K(+) permeation. Provides myo-inositol precursor for biosynthesis of phosphoinositides such as PI(4,5)P2, thus indirectly affecting the activity of phosphoinositide-dependent ion channels and Ca(2+) signaling upon osmotic stress. Has very low affinity for sugars such as L-fucose and L-xylose, with an affinity about three orders of magnitude lower than myo-inositol. This Canis lupus familiaris (Dog) protein is Sodium/myo-inositol cotransporter (SLC5A3).